The following is a 266-amino-acid chain: Large ribosomal subunit protein uL2m (266 aa).

It belongs to the universal ribosomal protein uL2 family.

It localises to the mitochondrion. The chain is Large ribosomal subunit protein uL2m (mrpl2) from Dictyostelium citrinum (Slime mold).